The sequence spans 90 residues: MAVRIRLKRMGAKKKPFYRIVVADSRSPRDGRFIETIGTYNPITEPAEIKIDEELALKWLQNGAKPSDTVRNLLSKQGILEKFHNLKYGK.

The protein belongs to the bacterial ribosomal protein bS16 family.

This is Small ribosomal subunit protein bS16 from Geobacillus sp. (strain WCH70).